The sequence spans 274 residues: Cyclase-like protein 1 (274 aa).

Positions 1 to 18 (MAASRLALLLLVLAVAAA) are cleaved as a signal peptide.

It belongs to the Cyclase 1 superfamily. In terms of tissue distribution, highly expressed in leaf sheaths. Expressed in leaf collars.

The protein localises to the secreted. The protein resides in the extracellular space. Its subcellular location is the extracellular matrix. Its function is as follows. May be involved in response to stresses. This chain is Cyclase-like protein 1, found in Oryza sativa subsp. japonica (Rice).